A 258-amino-acid polypeptide reads, in one-letter code: Isoprenyl transferase 2 (258 aa).

Positions 1–18 are enriched in pro residues; sequence MNFPPIHPSTPKMTPPDL. The interval 1–21 is disordered; that stretch reads MNFPPIHPSTPKMTPPDLDPQ. D32 is an active-site residue. D32 contacts Mg(2+). Substrate contacts are provided by residues 33-36, W37, R45, H49, and 77-79; these read GNGR and STE. The active-site Proton acceptor is the N80. Residues W81, R83, R200, and 206 to 208 contribute to the substrate site; that span reads RLS. Position 219 (E219) interacts with Mg(2+).

It belongs to the UPP synthase family. Homodimer. It depends on Mg(2+) as a cofactor.

In terms of biological role, catalyzes the condensation of isopentenyl diphosphate (IPP) with allylic pyrophosphates generating different type of terpenoids. This is Isoprenyl transferase 2 from Nostoc sp. (strain PCC 7120 / SAG 25.82 / UTEX 2576).